The primary structure comprises 86 residues: Acyl-CoA-binding protein homolog (86 aa).

Residues 2–86 (VSEQFNAAAE…FVEGLVAKYA (85 aa)) enclose the ACB domain. Residues Lys-14, 29 to 33 (YALFK), Lys-51, Lys-55, and Tyr-74 contribute to the an acyl-CoA site.

It belongs to the ACBP family. Expressed in larval and pupal brains. In adults, expressed in cardia, part of the Malpighian tubules, fat body, and gametes of both sexes.

In terms of biological role, binds medium- and long-chain acyl-CoA esters with very high affinity and may function as an intracellular carrier of acyl-CoA esters. May be involved in energy metabolism in a manner that depends on the substrate used for energy production. Dbi and its metabolites are involved in the regulation of multiple biological processes. In Drosophila melanogaster (Fruit fly), this protein is Acyl-CoA-binding protein homolog.